Reading from the N-terminus, the 115-residue chain is Large ribosomal subunit protein bL19 (115 aa).

It belongs to the bacterial ribosomal protein bL19 family.

This protein is located at the 30S-50S ribosomal subunit interface and may play a role in the structure and function of the aminoacyl-tRNA binding site. The sequence is that of Large ribosomal subunit protein bL19 from Akkermansia muciniphila (strain ATCC BAA-835 / DSM 22959 / JCM 33894 / BCRC 81048 / CCUG 64013 / CIP 107961 / Muc).